Consider the following 185-residue polypeptide: Transcription factor bHLH109 (185 aa).

Residues 67-117 (RSMEYRMMMEKKRRKEIKDKVDILQGLMPNHCTKPDLASKLENIIEYIKSL) enclose the bHLH domain.

It belongs to the bHLH protein family. As to quaternary structure, homodimer.

The protein localises to the nucleus. Its function is as follows. Transcription factor involved in somatic embryogenesis. Acts as a positive regulator of somatic embryo formation. Acts as a positive regulator of ECP63 by targeting its promoter and inducing its expression. The protein is Transcription factor bHLH109 (BHLH109) of Arabidopsis thaliana (Mouse-ear cress).